We begin with the raw amino-acid sequence, 214 residues long: Calcineurin B homologous protein 3 (214 aa).

Residue G2 is the site of N-myristoyl glycine attachment. Residues 110 to 145 (CRKDKLRFLFNMYDTDNDSKITLEEYRKVVEELLSG) form the EF-hand domain. D123, D125, D127, K129, and E134 together coordinate Ca(2+).

The protein belongs to the calcineurin regulatory subunit family. CHP subfamily. As to quaternary structure, monomer. Homodimer.

Its subcellular location is the nucleus. It is found in the cytoplasm. The protein resides in the membrane. It localises to the cell membrane. The protein localises to the cell projection. Its subcellular location is the lamellipodium. It is found in the ruffle membrane. Functions as an integral cofactor in cell pH regulation by controlling plasma membrane-type Na(+)/H(+) exchange activity. Promotes the induction of hematopoietic stem cell differentiation toward megakaryocytic lineage. Essential for the coupling of ERK cascade activation with the expression of ETS family genes in megakaryocytic differentiation. Also involved in granulocytic differentiation in a ERK-dependent manner. Inhibits the phosphatase activity of calcineurin. In Xenopus tropicalis (Western clawed frog), this protein is Calcineurin B homologous protein 3 (tesc).